The following is a 145-amino-acid chain: Large-conductance mechanosensitive channel (145 aa).

The next 3 membrane-spanning stretches (helical) occupy residues 10 to 30 (FALK…GAFA), 41 to 61 (IMPI…MFLI), and 87 to 107 (GNFI…FMMV).

This sequence belongs to the MscL family. Homopentamer.

The protein resides in the cell inner membrane. In terms of biological role, channel that opens in response to stretch forces in the membrane lipid bilayer. May participate in the regulation of osmotic pressure changes within the cell. This Psychrobacter arcticus (strain DSM 17307 / VKM B-2377 / 273-4) protein is Large-conductance mechanosensitive channel.